A 613-amino-acid chain; its full sequence is Leucine-rich repeat receptor-like protein FASCIATED EAR2 (613 aa).

Positions 1–28 are cleaved as a signal peptide; it reads MLTATPLPHQLLATFLLVLASATQPAVP. Over 29–573 the chain is Extracellular; it reads ASTDRAALLA…WLGGWHGENG (545 aa). 17 LRR repeats span residues 79 to 103, 104 to 128, 130 to 150, 151 to 176, 178 to 199, 202 to 226, 227 to 250, 251 to 274, 276 to 297, 298 to 322, 324 to 346, 347 to 370, 372 to 394, 435 to 459, 460 to 483, 484 to 507, and 508 to 531; these read TPSV…PLAL, LRRL…LPRS, LALD…LPSS, LPAL…SFPA, LAAL…IVAD, NSAL…IAAV, RSLQ…IGNL, TYLQ…LAGC, QLLY…ELDA, LASL…LAGC, SLEV…VAKW, LSLK…MFSF, LLQW…GFNV, VQAT…LVDM, KGLE…LGGM, GRLH…IAAM, and TVLE…KFPG. Asn91 is a glycosylation site (N-linked (GlcNAc...) asparagine). The N-linked (GlcNAc...) asparagine glycan is linked to Asn158. An N-linked (GlcNAc...) asparagine glycan is attached at Asn249. The N-linked (GlcNAc...) asparagine glycan is linked to Asn393. N-linked (GlcNAc...) asparagine glycosylation occurs at Asn466. An N-linked (GlcNAc...) asparagine glycan is attached at Asn514. The chain crosses the membrane as a helical span at residues 574 to 597; it reads WVSLGAFCISTMTSFYVSLATLLC. The Cytoplasmic segment spans residues 598-613; sequence SSNARNFVFRPVRVEY.

As to expression, expressed in ear primordia, vegetative apex and young leaf tissues. Barely detected in expanded leaf tissues and not expressed in roots.

It localises to the cell membrane. Functionally, receptor-like protein that regulates shoot meristem proliferation. Based on additive and synergistic phenotypes of double mutants, it is probable that unlike CLV1 and CLV2 in A.thaliana, FAE2 and TD1 do not function exclusively in a single pathway. This Zea mays (Maize) protein is Leucine-rich repeat receptor-like protein FASCIATED EAR2 (FEA2).